The chain runs to 216 residues: Probable transaldolase (216 aa).

K83 serves as the catalytic Schiff-base intermediate with substrate.

This sequence belongs to the transaldolase family. Type 3B subfamily.

The protein localises to the cytoplasm. The enzyme catalyses D-sedoheptulose 7-phosphate + D-glyceraldehyde 3-phosphate = D-erythrose 4-phosphate + beta-D-fructose 6-phosphate. It functions in the pathway carbohydrate degradation; pentose phosphate pathway; D-glyceraldehyde 3-phosphate and beta-D-fructose 6-phosphate from D-ribose 5-phosphate and D-xylulose 5-phosphate (non-oxidative stage): step 2/3. In terms of biological role, transaldolase is important for the balance of metabolites in the pentose-phosphate pathway. The chain is Probable transaldolase from Clostridioides difficile (strain 630) (Peptoclostridium difficile).